The sequence spans 517 residues: Zinc finger protein 215 (517 aa).

One can recognise an SCAN box domain in the interval 48–126 (RQKFRHFQYL…KDMVTLIEDV (79 aa)). Residues 164–237 (VTFKDVVVEF…EKEIPRKTIF (74 aa)) enclose the KRAB domain. 4 consecutive C2H2-type zinc fingers follow at residues 379–401 (YECY…QIIH), 407–429 (YKCS…QKLH), 462–484 (YQCV…QMIH), and 490–512 (FKCK…QKLH).

Belongs to the krueppel C2H2-type zinc-finger protein family.

The protein resides in the nucleus. Functionally, may be involved in transcriptional regulation. In Homo sapiens (Human), this protein is Zinc finger protein 215 (ZNF215).